The sequence spans 177 residues: Large ribosomal subunit protein uL6 (177 aa).

Belongs to the universal ribosomal protein uL6 family. In terms of assembly, part of the 50S ribosomal subunit.

In terms of biological role, this protein binds to the 23S rRNA, and is important in its secondary structure. It is located near the subunit interface in the base of the L7/L12 stalk, and near the tRNA binding site of the peptidyltransferase center. The chain is Large ribosomal subunit protein uL6 from Bradyrhizobium sp. (strain ORS 278).